The primary structure comprises 365 residues: Caffeic acid 3-O-methyltransferase (365 aa).

Met-130–Leu-136 provides a ligand contact to substrate. The interval Ala-162–Met-180 is substrate binding. The S-adenosyl-L-methionine site is built by Gly-208, Asp-231, Asp-251, Met-252, and Lys-265. His-269 functions as the Proton acceptor in the catalytic mechanism.

The protein belongs to the class I-like SAM-binding methyltransferase superfamily. Cation-independent O-methyltransferase family. COMT subfamily. In terms of assembly, homodimer.

The catalysed reaction is (E)-caffeate + S-adenosyl-L-methionine = (E)-ferulate + S-adenosyl-L-homocysteine + H(+). It functions in the pathway aromatic compound metabolism; phenylpropanoid biosynthesis. Its function is as follows. Catalyzes the conversion of caffeic acid to ferulic acid and of 5-hydroxyferulic acid to sinapic acid. The resulting products may subsequently be converted to the corresponding alcohols that are incorporated into lignins. The protein is Caffeic acid 3-O-methyltransferase (COMT1) of Rosa chinensis (China rose).